We begin with the raw amino-acid sequence, 335 residues long: Geranylgeranyl pyrophosphate synthase BTS1 (335 aa).

Isopentenyl diphosphate-binding residues include K36, R39, and H68. Residues D75 and D79 each contribute to the Mg(2+) site. R84 is a dimethylallyl diphosphate binding site. Residue R85 participates in isopentenyl diphosphate binding. Dimethylallyl diphosphate-binding residues include K169, T170, Q206, N213, K223, and K233.

This sequence belongs to the FPP/GGPP synthase family. It depends on Mg(2+) as a cofactor.

Its subcellular location is the cytoplasm. It catalyses the reaction isopentenyl diphosphate + dimethylallyl diphosphate = (2E)-geranyl diphosphate + diphosphate. The enzyme catalyses isopentenyl diphosphate + (2E)-geranyl diphosphate = (2E,6E)-farnesyl diphosphate + diphosphate. The catalysed reaction is isopentenyl diphosphate + (2E,6E)-farnesyl diphosphate = (2E,6E,10E)-geranylgeranyl diphosphate + diphosphate. It participates in isoprenoid biosynthesis; farnesyl diphosphate biosynthesis; farnesyl diphosphate from geranyl diphosphate and isopentenyl diphosphate: step 1/1. The protein operates within isoprenoid biosynthesis; geranyl diphosphate biosynthesis; geranyl diphosphate from dimethylallyl diphosphate and isopentenyl diphosphate: step 1/1. Its pathway is isoprenoid biosynthesis; geranylgeranyl diphosphate biosynthesis; geranylgeranyl diphosphate from farnesyl diphosphate and isopentenyl diphosphate: step 1/1. Catalyzes the trans-addition of the 3 molecules of IPP onto DMAPP to form geranylgeranyl pyrophosphate. Required for the membrane attachment of YPT1 and SEC4. May be involved in vesicle trafficking and protein sorting. This Saccharomyces cerevisiae (strain ATCC 204508 / S288c) (Baker's yeast) protein is Geranylgeranyl pyrophosphate synthase BTS1 (BTS1).